A 967-amino-acid polypeptide reads, in one-letter code: Translation initiation factor IF-2 (967 aa).

2 disordered regions span residues 201–320 (KPIV…PGFV) and 349–382 (LQGK…ELEA). Residues 233–248 (TGPTFSGQTIDLSQFN) show a composition bias toward polar residues. Over residues 256–272 (PNKGGAKPAGAGNNNNN) the composition is skewed to low complexity. Positions 354–363 (NKSKAAKYRR) are enriched in basic residues. The segment covering 364-382 (DKRDTHRQKSDDEQRELEA) has biased composition (basic and acidic residues). A tr-type G domain is found at 465–635 (HRAPIVTVMG…LLEAEVLDLK (171 aa)). A G1 region spans residues 474–481 (GHVDHGKT). 474–481 (GHVDHGKT) contributes to the GTP binding site. Positions 499 to 503 (GITQH) are G2. A G3 region spans residues 521–524 (DTPG). GTP is bound by residues 521–525 (DTPGH) and 575–578 (NKVD). A G4 region spans residues 575–578 (NKVD). Residues 611–613 (SAK) are G5.

This sequence belongs to the TRAFAC class translation factor GTPase superfamily. Classic translation factor GTPase family. IF-2 subfamily.

It is found in the cytoplasm. In terms of biological role, one of the essential components for the initiation of protein synthesis. Protects formylmethionyl-tRNA from spontaneous hydrolysis and promotes its binding to the 30S ribosomal subunits. Also involved in the hydrolysis of GTP during the formation of the 70S ribosomal complex. The protein is Translation initiation factor IF-2 of Flavobacterium psychrophilum (strain ATCC 49511 / DSM 21280 / CIP 103535 / JIP02/86).